The primary structure comprises 303 residues: Protein bottleneck (303 aa).

2 disordered regions span residues 102–142 and 185–272; these read SKRN…PTVT and VATT…ASVR. Low complexity-rich tracts occupy residues 115 to 138 and 185 to 197; these read RQQE…QQQE and VATT…TANS. Positions 260–272 are enriched in polar residues; it reads ATISRQSSSASVR.

In terms of tissue distribution, restricted to the blastoderm.

Its subcellular location is the cytoplasm. It is found in the cytoskeleton. Acts as a regulator of the microfilament network governing cellularization of the embryo. Determines the timing of a key conformational transition in the cortical microfilament network: the proper coordination of membrane invagination and basal closure of the cells. To do this, bnk possibly physically links neighboring contractile units of the early cycle 14 microfilament network in a manner that prevents basal constriction until the proper stage has been reached. Bnk together with nullo and Sry-alpha may provide auxiliary functions, by acting both to stabilize a large and dynamic microfilament structure and regulate its functions. In Drosophila melanogaster (Fruit fly), this protein is Protein bottleneck (bnk).